Consider the following 498-residue polypeptide: Cobyric acid synthase (498 aa).

Positions 257-447 (DLEIAVLRLP…LHGLLDNGPW (191 aa)) constitute a GATase cobBQ-type domain. Cys338 (nucleophile) is an active-site residue. His439 is an active-site residue.

This sequence belongs to the CobB/CobQ family. CobQ subfamily.

It participates in cofactor biosynthesis; adenosylcobalamin biosynthesis. Catalyzes amidations at positions B, D, E, and G on adenosylcobyrinic A,C-diamide. NH(2) groups are provided by glutamine, and one molecule of ATP is hydrogenolyzed for each amidation. The protein is Cobyric acid synthase of Synechococcus sp. (strain CC9605).